An 835-amino-acid chain; its full sequence is MIGILKKVFDVNQRQIKRMQKTVEQIDALESSIKPLTDEQLKGKTLEFKERLTKGETVDDLLPEAFAVVREAATRVLGMRPYGVQLMGGIALHEGNISEMKTGEGKTLTSTLPVYLNALTGKGVHVVTVNEYLAQRDASEMGQLHEFLGLTVGINLNSMSREEKQEAYAADITYSTNNELGFDYLRDNMVLYKEQCVQRPLHFAIIDEVDSILVDEARTPLIISGQAQKSTELYMFANAFVRTLENEKDYSFDVKTKNVMLTEDGITKAEKAFHIENLFDLKHVALLHHINQALRAHVVMHRDTDYVVQEGEIVIVDQFTGRLMKGRRYSEGLHQAIEAKEGVEIQNESMTLATITFQNYFRMYEKLSGMTGTAKTEEEEFRNIYNMNVIVIPTNKPIIRDDRADLIFKSMEGKFNAVVEDIVNRHKQGQPVLVGTVAIETSELISKMLTRKGVRHNILNAKNHAREADIIAEAGMKGAVTIATNMAGRGTDIKLGDDIKNIGLAVIGTERHESRRIDNQLRGRAGRQGDPGVTQFYLSMEDELMRRFGSDNMKAMMDRLGMDDSQPIESKMVSRAVESAQKRVEGNNYDARKQLLQYDDVLRQQREVIYKQRQEVMESENLRGIIEGMMKSTVERAVALHTQEEIEEDWNIKGLVDYLNTNLLQEGDVKEEELRRLAPEEMSEPIIAKLIERYNDKEKLMPEEQMREFEKVVVFRVVDTKWTEHIDAMDHLREGIHLRAYGQIDPLREYQMEGFAMFESMIASIEEEISRYIMKAEIEQNLERQEVVQGEAVHPSSDGEEAKKKPVVKGDQVGRNDLCKCGSGKKYKNCCGIGK.

ATP-binding positions include Gln-85, Gly-103–Thr-107, and Asp-492. Positions Val-788–Val-807 are disordered. 4 residues coordinate Zn(2+): Cys-819, Cys-821, Cys-830, and Cys-831.

Belongs to the SecA family. As to quaternary structure, monomer and homodimer. Part of the essential Sec protein translocation apparatus which comprises SecA, SecYEG and auxiliary proteins SecDF. Other proteins may also be involved. Requires Zn(2+) as cofactor.

The protein localises to the cell membrane. Its subcellular location is the cytoplasm. It carries out the reaction ATP + H2O + cellular proteinSide 1 = ADP + phosphate + cellular proteinSide 2.. Its function is as follows. Part of the Sec protein translocase complex. Interacts with the SecYEG preprotein conducting channel. Has a central role in coupling the hydrolysis of ATP to the transfer of proteins into and across the cell membrane, serving as an ATP-driven molecular motor driving the stepwise translocation of polypeptide chains across the membrane. The sequence is that of Protein translocase subunit SecA 1 from Bacillus thuringiensis (strain Al Hakam).